The primary structure comprises 278 residues: MSMGWMEAGFLGLLQGLTEFLPVSSSAHLRIAGEFLPSGADPGAAFTAITQIGTEMAVLVYFWSDIMRIAAAWLRQNLRLGEYNKADARLGWLIIVGSVPIVFLGLFFKDAIEHSLRNLYITAVMLIVFGIVLGLADRIGEKRYKLNQLIWRDGILFGFAQAMALIPGVSRSGGTISAGLLLGYTREAAARYSFLLAVPAVFGSGFYQLFKSIGEDNPVGWGQTGLATLIAFIVGYAVIVVFLKLVSTKSYMPFVWYRVVIGFILLALLGTGVISAGG.

7 consecutive transmembrane segments (helical) span residues 43–63 (GAAF…VYFW), 88–108 (ARLG…GLFF), 119–139 (LYIT…ADRI), 149–169 (LIWR…IPGV), 194–214 (FLLA…KSIG), 226–246 (LATL…LKLV), and 254–274 (FVWY…TGVI).

Belongs to the UppP family.

The protein resides in the cell inner membrane. It carries out the reaction di-trans,octa-cis-undecaprenyl diphosphate + H2O = di-trans,octa-cis-undecaprenyl phosphate + phosphate + H(+). Its function is as follows. Catalyzes the dephosphorylation of undecaprenyl diphosphate (UPP). Confers resistance to bacitracin. In Agrobacterium fabrum (strain C58 / ATCC 33970) (Agrobacterium tumefaciens (strain C58)), this protein is Undecaprenyl-diphosphatase 2.